Consider the following 89-residue polypeptide: Small ribosomal subunit protein uS17 (89 aa).

It belongs to the universal ribosomal protein uS17 family. In terms of assembly, part of the 30S ribosomal subunit.

One of the primary rRNA binding proteins, it binds specifically to the 5'-end of 16S ribosomal RNA. In Chlorobium phaeobacteroides (strain BS1), this protein is Small ribosomal subunit protein uS17.